The sequence spans 880 residues: Alanine--tRNA ligase (880 aa).

Residues His-563, His-567, Cys-673, and His-677 each coordinate Zn(2+).

It belongs to the class-II aminoacyl-tRNA synthetase family. Requires Zn(2+) as cofactor.

The protein resides in the cytoplasm. The enzyme catalyses tRNA(Ala) + L-alanine + ATP = L-alanyl-tRNA(Ala) + AMP + diphosphate. Catalyzes the attachment of alanine to tRNA(Ala) in a two-step reaction: alanine is first activated by ATP to form Ala-AMP and then transferred to the acceptor end of tRNA(Ala). Also edits incorrectly charged Ser-tRNA(Ala) and Gly-tRNA(Ala) via its editing domain. The chain is Alanine--tRNA ligase from Caulobacter vibrioides (strain ATCC 19089 / CIP 103742 / CB 15) (Caulobacter crescentus).